Consider the following 1164-residue polypeptide: MVSGGGSKTSGGEAASSGHRRSRHTSAAEQAQSSANKALRSQNQQPQNHGGGTESTNKAIQQYTVDARLHAVFEQSGESGKSFDYSQSLKTAPYDSSVPEQQITAYLSRIQRGGYTQPFGCLIAVEESTFTIIGYSENAREMLGLMSQSVPSIEDKSEVLTIGTDLRSLFKSSSYLLLERAFVAREITLLNPIWIHSNNTGKPFYAILHRVDVGILIDLEPARTEDPALSIAGAVQSQKLAVRAISHLQSLPSGDIKLLCDTVVESVRDLTGYDRVMVYKFHEDEHGEVVAESKRNDLEPYIGLHYPATDIPQASRFLFKQNRVRMIVDCYASPVRVVQDDRLTQFICLVGSTLRAPHGCHAQYMTNMGSIASLAMAVIINGNEEDGNGVNTGGRNSMRLWGLVVCHHTSARCIPFPLRYACEFLMQAFGLQLNMELQLALQVSEKRVLRMQTLLCDMLLRDSPAGIVTQRPSIMDLVKCNGAAFLYQGKYYPLGVTPTDSQINDIVEWLVANHSDSTGLSTDSLGDAGYPRAAALGDAVCGMAVACITKRDFLFWFRSHTEKEIKWGGAKHHPEDKDDGQRMNPRSSFQTFLEVVKSRCQPWETAEMDAIHSLQLILRDSFKESEAMDSKAAAAGAVQPHGDDMVQQGMQEIGAVAREMVRLIETATVPIFAVDIDGCINGWNAKIAELTGLSVEDAMGKSLVRELIYKEYKETVDRLLSCALKGDEGKNVEVKLKTFGSELQGKAMFVVVNACSSKDYLNNIVGVCFVGQDVTGHKIVMDKFINIQGDYKAIIHSPNPLIPPIFAADENTCCLEWNTAMEKLTGWPRSEVIGKLLVREVFGSYCRLKGPDALTKFMIVLHNAIGGQDTDKFPFPFFDRKGEFIQALLTLNKRVSIDGKIIGAFCFLQIPSPELQQALEVQRRQESEYFSRRKELAYIFQVIKNPLSGLRFTNSLLEDMDLNEDQKQLLETSVSCEKQISKIVGDMDVKSIDDGSFLLERTEFFIGNVTNAVVSQVMLVVRERNLQLIRNIPTEVKSMAVYGDQIRLQQVLAEFLLSIVRYAPMEGSVELHLCPTLNQMADGFSAVRLEFRMACAGEGVPPEKVQDMFHSSRWTSPEGLGLSVCRKILKLMNGGVQYIREFERSYFLIVIELPVPLMMMMPSS.

The interval 1–55 (MVSGGGSKTSGGEAASSGHRRSRHTSAAEQAQSSANKALRSQNQQPQNHGGGTES) is disordered. The segment covering 25-55 (TSAAEQAQSSANKALRSQNQQPQNHGGGTES) has biased composition (polar residues). The GAF domain occupies 255 to 437 (DIKLLCDTVV…AFGLQLNMEL (183 aa)). A phytochromobilin-binding site is contributed by Cys-360. PAS domains are found at residues 656–727 (VARE…LKGD) and 790–861 (DYKA…MIVL). One can recognise a Histidine kinase domain in the interval 938-1157 (YIFQVIKNPL…LIVIELPVPL (220 aa)).

The protein belongs to the phytochrome family. As to quaternary structure, homodimer. Contains one covalently linked phytochromobilin chromophore.

Functionally, regulatory photoreceptor which exists in two forms that are reversibly interconvertible by light: the Pr form that absorbs maximally in the red region of the spectrum and the Pfr form that absorbs maximally in the far-red region. Photoconversion of Pr to Pfr induces an array of morphogenic responses, whereas reconversion of Pfr to Pr cancels the induction of those responses. Pfr controls the expression of a number of nuclear genes including those encoding the small subunit of ribulose-bisphosphate carboxylase, chlorophyll A/B binding protein, protochlorophyllide reductase, rRNA, etc. It also controls the expression of its own gene(s) in a negative feedback fashion. The sequence is that of Phytochrome D (PHYD) from Arabidopsis thaliana (Mouse-ear cress).